A 461-amino-acid polypeptide reads, in one-letter code: High-affinity Na(+)/H(+) antiporter NhaS3 (461 aa).

A run of 11 helical transmembrane segments spans residues 22–42 (TEIA…IYFA), 58–78 (VLGE…LLLF), 113–133 (SEVI…EIGL), 148–170 (AIVA…MTIF), 175–197 (IPAI…KVLA), 209–229 (IIIG…AVVG), 239–259 (ISNI…SILI), 280–300 (LLLV…IVQL), 360–380 (GLII…VTGF), 391–411 (LAIG…AGVG), and 424–444 (AIIV…RAVF).

This sequence belongs to the monovalent cation:proton antiporter 2 (CPA2) transporter (TC 2.A.37) family.

It is found in the cellular thylakoid membrane. Na(+)/H(+) antiporter that transports sodium from the cytoplasm into the thylakoid lumen in exchange for protons. Contributes to sodium homeostasis and tolerance. Also has Li(+)/H(+) antiport activity under K(+)-free conditions, but not under K(+)-rich conditions. This is High-affinity Na(+)/H(+) antiporter NhaS3 (nhaS3) from Synechocystis sp. (strain ATCC 27184 / PCC 6803 / Kazusa).